Reading from the N-terminus, the 490-residue chain is Pleckstrin homology domain-containing family O member 2 (490 aa).

In terms of domain architecture, PH spans 18–119 (MVDKAGWIKK…WIKALNEGIN (102 aa)). 2 positions are modified to phosphoserine: Ser164 and Ser167. A disordered region spans residues 173 to 402 (LDLDVPDSGP…DLLGEGPRHP (230 aa)). The segment covering 230-243 (APTPVSASSEVSPE) has biased composition (low complexity). Position 232 is a phosphothreonine (Thr232). A phosphoserine mark is found at Ser235, Ser237, and Ser238. Acidic residues predominate over residues 244–257 (SQEDSETPAEEDSG). Ser273 bears the Phosphoserine mark. Positions 277–297 (PSPQEAPAAESAEPSQAPCSE) are enriched in low complexity. Thr298 and Thr311 each carry phosphothreonine. Ser390 and Ser468 each carry phosphoserine. A coiled-coil region spans residues 439–481 (SAETLLSQAVEQLRQATQVLQEMRDLGELSQEAPGLREKRKEL).

The chain is Pleckstrin homology domain-containing family O member 2 (PLEKHO2) from Homo sapiens (Human).